Consider the following 181-residue polypeptide: Anthrone oxygenase encC (181 aa).

Helical transmembrane passes span Met1–Gly21, Gln65–Ala81, Leu88–Met108, and Phe153–Ala173.

The protein belongs to the anthrone oxygenase family. In terms of tissue distribution, endocrocin is specifically produced in conidia.

The protein resides in the membrane. Functionally, anthrone oxygenase; part of the gene cluster that mediates the biosynthesis of endocrocin, a simple anthraquinone interesting for many biotechnological applications. The pathway begins with the synthesis of atrochrysone thioester by the polyketide synthase (PKS) encA. The atrochrysone carboxyl ACP thioesterase encB then breaks the thioester bond and releases the atrochrysone carboxylic acid from encA. The atrochrysone carboxylic acid is then converted to endocrocin anthrone which is further oxidized into endocrocin by the anthrone oxygenase encC. The exact function of encD has not been identified yet, but it negatively regulates endocrocin production, likely through the modification of endocrocin itself. The chain is Anthrone oxygenase encC from Aspergillus fumigatus (strain ATCC MYA-4609 / CBS 101355 / FGSC A1100 / Af293) (Neosartorya fumigata).